A 105-amino-acid polypeptide reads, in one-letter code: Protamine-2 (105 aa).

Positions 1 to 74 are disordered; sequence MVRYRMRSPS…RRSCRRRRRH (74 aa). Residues Ser-8, Ser-10, and Ser-33 each carry the phosphoserine modification. The segment covering 33–42 has biased composition (basic and acidic residues); that stretch reads SPERVEDYGR. Basic residues predominate over residues 43-74; the sequence is THRGHHRHRRCSRKRLHRIHKRRRSCRRRRRH.

Belongs to the protamine P2 family. Interacts with TDRP. Proteolytic processing into mature chains is required for histone eviction during spermatogenesis. Transition proteins (TNP1 and TNP2) are required for processing. Testis.

Its subcellular location is the nucleus. It localises to the chromosome. Its function is as follows. Protamines substitute for histones in the chromatin of sperm during the haploid phase of spermatogenesis. They compact sperm DNA into a highly condensed, stable and inactive complex. The chain is Protamine-2 (Prm2) from Rattus fuscipes (Bush rat).